The chain runs to 174 residues: Gamma-crystallin A (174 aa).

Beta/gamma crystallin 'Greek key' domains are found at residues 2–40 (GKIT…RVDS) and 41–83 (GCWM…RSIP). The segment at 84–87 (YTSS) is connecting peptide. Beta/gamma crystallin 'Greek key' domains follow at residues 88–128 (HRIR…HVLE) and 129–171 (GSWV…RRVM).

Belongs to the beta/gamma-crystallin family.

Its function is as follows. Crystallins are the dominant structural components of the vertebrate eye lens. The polypeptide is Gamma-crystallin A (Cryga) (Rattus norvegicus (Rat)).